Consider the following 647-residue polypeptide: Exoribonuclease 2 (647 aa).

The region spanning 192–520 (REDLTALSFV…NHRLLKAIIS (329 aa)) is the RNB domain. One can recognise an S1 motif domain in the interval 565–647 (ESTFNAEIID…ETRNIVARPI (83 aa)).

Belongs to the RNR ribonuclease family. RNase II subfamily.

The protein localises to the cytoplasm. It catalyses the reaction Exonucleolytic cleavage in the 3'- to 5'-direction to yield nucleoside 5'-phosphates.. In terms of biological role, involved in mRNA degradation. Hydrolyzes single-stranded polyribonucleotides processively in the 3' to 5' direction. The protein is Exoribonuclease 2 of Proteus mirabilis (strain HI4320).